The following is a 265-amino-acid chain: Ribosomal RNA small subunit methyltransferase G (265 aa).

The S-adenosyl-L-methionine site is built by Gly75, Leu80, and Arg145. The disordered stretch occupies residues 212–265 (RAVRSSQRTRAESRGGRGDGERHDGRQVRRTSRDSLRSREVGRDQPTRGQSRST). Over residues 220–257 (TRAESRGGRGDGERHDGRQVRRTSRDSLRSREVGRDQP) the composition is skewed to basic and acidic residues.

Belongs to the methyltransferase superfamily. RNA methyltransferase RsmG family.

Its subcellular location is the cytoplasm. Functionally, specifically methylates the N7 position of guanine in position 518 of 16S rRNA. The protein is Ribosomal RNA small subunit methyltransferase G of Frankia casuarinae (strain DSM 45818 / CECT 9043 / HFP020203 / CcI3).